A 360-amino-acid chain; its full sequence is Peptide chain release factor 1 (360 aa).

Glutamine 235 bears the N5-methylglutamine mark.

This sequence belongs to the prokaryotic/mitochondrial release factor family. In terms of processing, methylated by PrmC. Methylation increases the termination efficiency of RF1.

The protein resides in the cytoplasm. Its function is as follows. Peptide chain release factor 1 directs the termination of translation in response to the peptide chain termination codons UAG and UAA. The protein is Peptide chain release factor 1 of Burkholderia cenocepacia (strain HI2424).